The sequence spans 103 residues: Large ribosomal subunit protein uL24 (103 aa).

The protein belongs to the universal ribosomal protein uL24 family. As to quaternary structure, part of the 50S ribosomal subunit.

One of two assembly initiator proteins, it binds directly to the 5'-end of the 23S rRNA, where it nucleates assembly of the 50S subunit. Functionally, one of the proteins that surrounds the polypeptide exit tunnel on the outside of the subunit. This is Large ribosomal subunit protein uL24 from Bacillus cytotoxicus (strain DSM 22905 / CIP 110041 / 391-98 / NVH 391-98).